Consider the following 150-residue polypeptide: Flagellar assembly factor FliW (150 aa).

Belongs to the FliW family. In terms of assembly, interacts with translational regulator CsrA and flagellin(s).

Its subcellular location is the cytoplasm. In terms of biological role, acts as an anti-CsrA protein, binds CsrA and prevents it from repressing translation of its target genes, one of which is flagellin. Binds to flagellin and participates in the assembly of the flagellum. In Thermoanaerobacter pseudethanolicus (strain ATCC 33223 / 39E) (Clostridium thermohydrosulfuricum), this protein is Flagellar assembly factor FliW.